The primary structure comprises 210 residues: uncharacterized protein (210 aa).

Positions 90–193 (KPDQIIVNEY…RISITFRNVI (104 aa)) constitute a Fe2OG dioxygenase domain.

This is an uncharacterized protein from Acanthamoeba polyphaga (Amoeba).